Reading from the N-terminus, the 153-residue chain is Large ribosomal subunit protein bL27m (153 aa).

Residues 1-37 constitute a mitochondrion transit peptide; that stretch reads MINQGLFIRVNNFQLLKASLAYKKASNILTFPPIRTS. Residues 34–57 form a disordered region; sequence IRTSTKHGGGSSKNTGDSAGRRLG.

Belongs to the bacterial ribosomal protein bL27 family. As to quaternary structure, component of the mitochondrial large ribosomal subunit (mt-LSU). Mature yeast 74S mitochondrial ribosomes consist of a small (37S) and a large (54S) subunit. The 37S small subunit contains a 15S ribosomal RNA (15S mt-rRNA) and at least 32 different proteins. The 54S large subunit contains a 21S rRNA (21S mt-rRNA) and at least 45 different proteins.

The protein localises to the mitochondrion. Functionally, component of the mitochondrial ribosome (mitoribosome), a dedicated translation machinery responsible for the synthesis of mitochondrial genome-encoded proteins, including at least some of the essential transmembrane subunits of the mitochondrial respiratory chain. The mitoribosomes are attached to the mitochondrial inner membrane and translation products are cotranslationally integrated into the membrane. In Schizosaccharomyces pombe (strain 972 / ATCC 24843) (Fission yeast), this protein is Large ribosomal subunit protein bL27m (mrp7).